The sequence spans 427 residues: Serine--tRNA ligase (427 aa).

235–237 (TAE) is an L-serine binding site. ATP contacts are provided by residues 266–268 (RRE) and Val282. Glu289 is an L-serine binding site. 353–356 (EASS) contributes to the ATP binding site. Ser389 lines the L-serine pocket.

The protein belongs to the class-II aminoacyl-tRNA synthetase family. Type-1 seryl-tRNA synthetase subfamily. Homodimer. The tRNA molecule binds across the dimer.

The protein localises to the cytoplasm. The enzyme catalyses tRNA(Ser) + L-serine + ATP = L-seryl-tRNA(Ser) + AMP + diphosphate + H(+). The catalysed reaction is tRNA(Sec) + L-serine + ATP = L-seryl-tRNA(Sec) + AMP + diphosphate + H(+). Its pathway is aminoacyl-tRNA biosynthesis; selenocysteinyl-tRNA(Sec) biosynthesis; L-seryl-tRNA(Sec) from L-serine and tRNA(Sec): step 1/1. In terms of biological role, catalyzes the attachment of serine to tRNA(Ser). Is also able to aminoacylate tRNA(Sec) with serine, to form the misacylated tRNA L-seryl-tRNA(Sec), which will be further converted into selenocysteinyl-tRNA(Sec). This Chloroherpeton thalassium (strain ATCC 35110 / GB-78) protein is Serine--tRNA ligase.